Consider the following 143-residue polypeptide: Nucleoside diphosphate kinase (143 aa).

Residues lysine 11, phenylalanine 59, arginine 87, threonine 93, arginine 104, and asparagine 114 each coordinate ATP. The active-site Pros-phosphohistidine intermediate is histidine 117.

Belongs to the NDK family. In terms of assembly, homotetramer. The cofactor is Mg(2+).

It localises to the cytoplasm. It carries out the reaction a 2'-deoxyribonucleoside 5'-diphosphate + ATP = a 2'-deoxyribonucleoside 5'-triphosphate + ADP. It catalyses the reaction a ribonucleoside 5'-diphosphate + ATP = a ribonucleoside 5'-triphosphate + ADP. Its function is as follows. Major role in the synthesis of nucleoside triphosphates other than ATP. The ATP gamma phosphate is transferred to the NDP beta phosphate via a ping-pong mechanism, using a phosphorylated active-site intermediate. The polypeptide is Nucleoside diphosphate kinase (Escherichia coli O81 (strain ED1a)).